The chain runs to 130 residues: Small ribosomal subunit protein uS11 (130 aa).

It belongs to the universal ribosomal protein uS11 family. Part of the 30S ribosomal subunit. Interacts with proteins S7 and S18. Binds to IF-3.

Located on the platform of the 30S subunit, it bridges several disparate RNA helices of the 16S rRNA. Forms part of the Shine-Dalgarno cleft in the 70S ribosome. This is Small ribosomal subunit protein uS11 from Buchnera aphidicola subsp. Schizaphis graminum (strain Sg).